Consider the following 366-residue polypeptide: Anthranilate phosphoribosyltransferase (366 aa).

5-phospho-alpha-D-ribose 1-diphosphate contacts are provided by residues glycine 103, 106–107 (GD), threonine 111, 113–116 (NLST), 131–139 (KHGNRASSS), and glycine 143. An anthranilate-binding site is contributed by glycine 103. Serine 115 provides a ligand contact to Mg(2+). Asparagine 134 is an anthranilate binding site. Residue arginine 189 coordinates anthranilate. Mg(2+) contacts are provided by aspartate 247 and glutamate 248.

This sequence belongs to the anthranilate phosphoribosyltransferase family. In terms of assembly, homodimer. Mg(2+) is required as a cofactor.

The enzyme catalyses N-(5-phospho-beta-D-ribosyl)anthranilate + diphosphate = 5-phospho-alpha-D-ribose 1-diphosphate + anthranilate. The protein operates within amino-acid biosynthesis; L-tryptophan biosynthesis; L-tryptophan from chorismate: step 2/5. Its function is as follows. Catalyzes the transfer of the phosphoribosyl group of 5-phosphorylribose-1-pyrophosphate (PRPP) to anthranilate to yield N-(5'-phosphoribosyl)-anthranilate (PRA). In Mycobacterium leprae (strain Br4923), this protein is Anthranilate phosphoribosyltransferase.